Consider the following 355-residue polypeptide: MRLTHVTACICLLVAVAVLFSGCTGTTDDQTTTPTPTATAAEEVQLKVFHAGSLTGPFEKVKAEFEAEHSGVTVLLEPAGSVDCVKKITENGKPADVLASADYALIPQLMVPDDADWYLTFAKNRMVLTYSNESKYADEITAENWYEVLARDGVRWGFSDPNSDPCGYRSPMVIQLAEGYYEDDQIFETLVGEHSEITVTEEGGVYTIHAADPKPDSTTLTIRPKSVELVQMIQAGGLDYAWEYRSVAVQNDLEFIELPEEIDLSSIDFAENYATVQTEAKKGDGTTLYVGSPIVYGVTVPKIAQHPDLGIEFVEMLIGATGQEILERDGQPPIVPAGGYGEVPDALQSLVEMKS.

The first 22 residues, 1–22 (MRLTHVTACICLLVAVAVLFSG), serve as a signal peptide directing secretion.

It belongs to the bacterial solute-binding protein 1 family. WtpA subfamily.

This is an uncharacterized protein from Methanoculleus marisnigri (strain ATCC 35101 / DSM 1498 / JR1).